Reading from the N-terminus, the 203-residue chain is uncharacterized protein (203 aa).

This sequence belongs to the DadA oxidoreductase family.

In terms of biological role, either a functional dehydrogenase or a non-functional fragment. This is an uncharacterized protein from Sinorhizobium fredii (strain NBRC 101917 / NGR234).